A 707-amino-acid polypeptide reads, in one-letter code: ATP-dependent zinc metalloprotease FtsH (707 aa).

The Cytoplasmic segment spans residues methionine 1–serine 25. The chain crosses the membrane as a helical span at residues isoleucine 26–phenylalanine 46. Residues leucine 47–alanine 128 lie on the Extracellular side of the membrane. The chain crosses the membrane as a helical span at residues threonine 129–valine 149. The Cytoplasmic portion of the chain corresponds to threonine 150–lysine 707. Residue glycine 246–threonine 253 coordinates ATP. Histidine 468 contributes to the Zn(2+) binding site. Glutamate 469 is a catalytic residue. Positions 472 and 546 each coordinate Zn(2+).

In the central section; belongs to the AAA ATPase family. It in the C-terminal section; belongs to the peptidase M41 family. In terms of assembly, homohexamer. Requires Zn(2+) as cofactor.

The protein localises to the cell membrane. In terms of biological role, acts as a processive, ATP-dependent zinc metallopeptidase for both cytoplasmic and membrane proteins. Plays a role in the quality control of integral membrane proteins. In Mycoplasma mobile (strain ATCC 43663 / 163K / NCTC 11711) (Mesomycoplasma mobile), this protein is ATP-dependent zinc metalloprotease FtsH.